The primary structure comprises 135 residues: VapC ribonuclease aq_1901 (135 aa).

The PINc domain occupies 3–130 (LLDTTVLLDF…FKKLGFKTVN (128 aa)). Residue D5 participates in Mg(2+) binding.

It belongs to the PINc/VapC protein family. Mg(2+) serves as cofactor.

Toxic component of a type II toxin-antitoxin (TA) system. An RNase. The chain is VapC ribonuclease aq_1901 from Aquifex aeolicus (strain VF5).